Reading from the N-terminus, the 142-residue chain is ATP synthase epsilon chain (142 aa).

It belongs to the ATPase epsilon chain family. F-type ATPases have 2 components, CF(1) - the catalytic core - and CF(0) - the membrane proton channel. CF(1) has five subunits: alpha(3), beta(3), gamma(1), delta(1), epsilon(1). CF(0) has three main subunits: a, b and c.

It is found in the cell inner membrane. Produces ATP from ADP in the presence of a proton gradient across the membrane. This is ATP synthase epsilon chain from Histophilus somni (strain 129Pt) (Haemophilus somnus).